Reading from the N-terminus, the 137-residue chain is Acidic phospholipase A2 beta-bungarotoxin A chain (137 aa).

A signal peptide spans 1–9 (AVCVSLLGA). The propeptide occupies 10-17 (ANIPPHPL). Intrachain disulfides connect Cys44/Cys136, Cys46/Cys62, Cys61/Cys117, Cys68/Cys110, Cys78/Cys103, and Cys96/Cys108. The Ca(2+) site is built by Tyr45, Gly47, and Gly49. His65 is an active-site residue. Asp66 serves as a coordination point for Ca(2+). Residue Asp111 is part of the active site.

This sequence belongs to the phospholipase A2 family. Group I subfamily. D49 sub-subfamily. Heterodimer; disulfide-linked. The A chain has phospholipase A2 activity and the B chain shows homology with the basic protease inhibitors. Ca(2+) serves as cofactor. In terms of tissue distribution, expressed by the venom gland.

The protein resides in the secreted. It catalyses the reaction a 1,2-diacyl-sn-glycero-3-phosphocholine + H2O = a 1-acyl-sn-glycero-3-phosphocholine + a fatty acid + H(+). Its function is as follows. Beta bungarotoxin is a presynaptic neurotoxin. The A chain has phospholipase activity. PLA2 catalyzes the calcium-dependent hydrolysis of the 2-acyl groups in 3-sn-phosphoglycerides. The sequence is that of Acidic phospholipase A2 beta-bungarotoxin A chain from Bungarus candidus (Malayan krait).